The sequence spans 290 residues: Protease HtpX (290 aa).

2 consecutive transmembrane segments (helical) span residues 12–32 and 42–62; these read IAVM…GLLA and ALLV…LLIS. A Zn(2+)-binding site is contributed by His-147. Glu-148 is a catalytic residue. Residue His-151 coordinates Zn(2+). A run of 2 helical transmembrane segments spans residues 162-182 and 197-217; these read LIQG…GHVV and FWIV…MIVM. A Zn(2+)-binding site is contributed by Glu-224.

It belongs to the peptidase M48B family. The cofactor is Zn(2+).

The protein resides in the cell inner membrane. This chain is Protease HtpX, found in Pseudoalteromonas atlantica (strain T6c / ATCC BAA-1087).